We begin with the raw amino-acid sequence, 626 residues long: L-amino-acid oxidase 4 (626 aa).

The signal sequence occupies residues 1 to 18 (KSFFRSLVAASLVIVSYS). N-linked (GlcNAc...) asparagine glycosylation occurs at Asn54. FAD-binding residues include Gly75, Glu94, Ala95, Arg102, Met122, and Arg123. Arg123 contacts L-glutamate. Arg123 is a binding site for L-glutamine. Arg123 lines the L-lysine pocket. Arg123 serves as a coordination point for L-phenylalanine. Residues Asn164, Asn193, and Asn331 are each glycosylated (N-linked (GlcNAc...) asparagine). Residue Val334 participates in FAD binding. Tyr457 provides a ligand contact to L-glutamate. Tyr457 contacts L-glutamine. Tyr457 provides a ligand contact to L-lysine. Tyr457 lines the L-phenylalanine pocket. FAD is bound at residue Glu551. Ala558 contributes to the L-phenylalanine binding site. Residues Trp559 and Val560 each contribute to the FAD site.

Belongs to the flavin monoamine oxidase family. FIG1 subfamily. Homodimer. Requires FAD as cofactor. Post-translationally, out of the 4 glycosylated residues, Asn-54 is hypermannosylated. The presence of a hypermannosylated N-glycan on Asn-54 leads to adoption of a more active conformation in the absence of acid activation.

Its subcellular location is the secreted. It carries out the reaction an L-alpha-amino acid + O2 + H2O = a 2-oxocarboxylate + H2O2 + NH4(+). The catalysed reaction is L-lysine + O2 + H2O = 6-amino-2-oxohexanoate + H2O2 + NH4(+). The enzyme catalyses L-glutamate + O2 + H2O = H2O2 + 2-oxoglutarate + NH4(+). It catalyses the reaction L-arginine + O2 + H2O = 5-guanidino-2-oxopentanoate + H2O2 + NH4(+). It carries out the reaction L-leucine + O2 + H2O = 4-methyl-2-oxopentanoate + H2O2 + NH4(+). The catalysed reaction is L-asparagine + O2 + H2O = 2-oxosuccinamate + H2O2 + NH4(+). The enzyme catalyses L-histidine + O2 + H2O = 3-(imidazol-5-yl)pyruvate + H2O2 + NH4(+). It catalyses the reaction L-isoleucine + O2 + H2O = (S)-3-methyl-2-oxopentanoate + H2O2 + NH4(+). It carries out the reaction L-methionine + O2 + H2O = 4-methylsulfanyl-2-oxobutanoate + H2O2 + NH4(+). The catalysed reaction is L-phenylalanine + O2 + H2O = 3-phenylpyruvate + H2O2 + NH4(+). The enzyme catalyses L-tyrosine + O2 + H2O = 3-(4-hydroxyphenyl)pyruvate + H2O2 + NH4(+). It catalyses the reaction L-glutamine + O2 + H2O = 2-oxoglutaramate + H2O2 + NH4(+). It carries out the reaction L-alanine + O2 + H2O = pyruvate + H2O2 + NH4(+). With respect to regulation, LAAO4 is activated by exposure to acidic pH, the detergent sodium dodecyl sulfate, or freezing. Functionally, catalyzes the oxidative deamination of L-amino acids with molecular oxygen to the corresponding alpha-keto acids and ammonia. L-glutamine shows the highest relative activity but LAAO4 has a broad substrate specificity, including L-amino acids with big aromatic, acidic and basic side chains. Methyl esters of these L-amino acids are also accepted, ethyl esters are converted but with lower activity, whereas D-Amino acids are not converted. No reaction is detected for small polar amino acids such as L-cysteine or L-aspartate, and very little for small, branched hydrophobic amino acids like L-valine. This is L-amino-acid oxidase 4 from Hebeloma cylindrosporum.